We begin with the raw amino-acid sequence, 250 residues long: Anamorsin homolog 2 (250 aa).

Positions Met1–Gln102 are N-terminal SAM-like domain. The tract at residues Gln102 to Val149 is linker. Residues Cys155, Cys162, Cys165, and Cys167 each coordinate [2Fe-2S] cluster. The segment at Cys155–Cys167 is fe-S binding site A. Cys193, Cys196, Cys204, and Cys207 together coordinate [4Fe-4S] cluster. 2 consecutive short sequence motifs (cx2C motif) follow at residues Cys193 to Cys196 and Cys204 to Cys207. The tract at residues Cys193–Cys207 is fe-S binding site B.

This sequence belongs to the anamorsin family. In terms of assembly, monomer. [2Fe-2S] cluster is required as a cofactor. It depends on [4Fe-4S] cluster as a cofactor.

It localises to the cytoplasm. The protein localises to the mitochondrion intermembrane space. Functionally, component of the cytosolic iron-sulfur (Fe-S) protein assembly (CIA) machinery. Required for the maturation of extramitochondrial Fe-S proteins. Part of an electron transfer chain functioning in an early step of cytosolic Fe-S biogenesis, facilitating the de novo assembly of a [4Fe-4S] cluster on the cytosolic Fe-S scaffold complex. Electrons are transferred from NADPH via a FAD- and FMN-containing diflavin oxidoreductase. Together with the diflavin oxidoreductase, also required for the assembly of the diferric tyrosyl radical cofactor of ribonucleotide reductase (RNR), probably by providing electrons for reduction during radical cofactor maturation in the catalytic small subunit. The sequence is that of Anamorsin homolog 2 from Paramecium tetraurelia.